The following is a 310-amino-acid chain: Putative S-adenosyl-L-methionine-dependent methyltransferase MUL_2766 (310 aa).

S-adenosyl-L-methionine contacts are provided by residues Asp131 and 160–161 (DL).

The protein belongs to the UPF0677 family.

Exhibits S-adenosyl-L-methionine-dependent methyltransferase activity. In Mycobacterium ulcerans (strain Agy99), this protein is Putative S-adenosyl-L-methionine-dependent methyltransferase MUL_2766.